The primary structure comprises 367 residues: (E)-2-epi-beta-caryophyllene synthase (367 aa).

Asp93, Asn234, and Ser238 together coordinate Mg(2+). Positions 93–97 (DDIAE) match the DDXXE motif motif.

It belongs to the terpene synthase family. The cofactor is Mg(2+). Mn(2+) serves as cofactor.

The catalysed reaction is (2E,6E)-farnesyl diphosphate = (E)-2-epi-beta-caryophyllene + diphosphate. Its pathway is secondary metabolite biosynthesis; terpenoid biosynthesis. Functionally, sesquiterpene synthase converting farnesyl diphosphate to (E)-2-epi-beta-caryophyllene as the major product, and to two other unidentified sesquiterpenes. Has no diterpene synthase activity. This chain is (E)-2-epi-beta-caryophyllene synthase, found in Selaginella moellendorffii (Spikemoss).